Reading from the N-terminus, the 252-residue chain is Imidazole glycerol phosphate synthase subunit HisF (252 aa).

Residues aspartate 11 and aspartate 130 contribute to the active site.

It belongs to the HisA/HisF family. Heterodimer of HisH and HisF.

It is found in the cytoplasm. The enzyme catalyses 5-[(5-phospho-1-deoxy-D-ribulos-1-ylimino)methylamino]-1-(5-phospho-beta-D-ribosyl)imidazole-4-carboxamide + L-glutamine = D-erythro-1-(imidazol-4-yl)glycerol 3-phosphate + 5-amino-1-(5-phospho-beta-D-ribosyl)imidazole-4-carboxamide + L-glutamate + H(+). It participates in amino-acid biosynthesis; L-histidine biosynthesis; L-histidine from 5-phospho-alpha-D-ribose 1-diphosphate: step 5/9. IGPS catalyzes the conversion of PRFAR and glutamine to IGP, AICAR and glutamate. The HisF subunit catalyzes the cyclization activity that produces IGP and AICAR from PRFAR using the ammonia provided by the HisH subunit. The polypeptide is Imidazole glycerol phosphate synthase subunit HisF (Staphylococcus aureus (strain Mu3 / ATCC 700698)).